A 960-amino-acid polypeptide reads, in one-letter code: Putative helicase L207/L206 (960 aa).

The disordered stretch occupies residues 1–32 (MTSKTENKKSVSSKTGRTTNNSTNKKTTEKSV). Positions 12-25 (SSKTGRTTNNSTNK) are enriched in low complexity. Positions 646–807 (SMREYILTLL…FIKHSEATKK (162 aa)) constitute an SF3 helicase domain.

This Acanthamoeba polyphaga mimivirus (APMV) protein is Putative helicase L207/L206.